We begin with the raw amino-acid sequence, 361 residues long: Peptide chain release factor 1 (361 aa).

Position 237 is an N5-methylglutamine (Q237). A compositionally biased stretch (basic and acidic residues) spans 285 to 296 (DEKRRSAEESTR). The segment at 285 to 305 (DEKRRSAEESTRRNLVGSGDR) is disordered.

This sequence belongs to the prokaryotic/mitochondrial release factor family. Post-translationally, methylated by PrmC. Methylation increases the termination efficiency of RF1.

Its subcellular location is the cytoplasm. Functionally, peptide chain release factor 1 directs the termination of translation in response to the peptide chain termination codons UAG and UAA. This Shewanella sediminis (strain HAW-EB3) protein is Peptide chain release factor 1.